Reading from the N-terminus, the 662-residue chain is DNA ligase (662 aa).

NAD(+) is bound by residues 31-35 (DKDYD) and 79-80 (SL). Lys-121 serves as the catalytic N6-AMP-lysine intermediate. Residues Arg-143, Glu-177, and Lys-313 each contribute to the NAD(+) site. Residues Cys-406, Cys-409, Cys-422, and Cys-428 each coordinate Zn(2+). A BRCT domain is found at 586–662 (VLESPFMGKT…LSEEEFENMI (77 aa)).

The protein belongs to the NAD-dependent DNA ligase family. LigA subfamily. Mg(2+) is required as a cofactor. Mn(2+) serves as cofactor.

It catalyses the reaction NAD(+) + (deoxyribonucleotide)n-3'-hydroxyl + 5'-phospho-(deoxyribonucleotide)m = (deoxyribonucleotide)n+m + AMP + beta-nicotinamide D-nucleotide.. DNA ligase that catalyzes the formation of phosphodiester linkages between 5'-phosphoryl and 3'-hydroxyl groups in double-stranded DNA using NAD as a coenzyme and as the energy source for the reaction. It is essential for DNA replication and repair of damaged DNA. The protein is DNA ligase of Clostridium perfringens (strain 13 / Type A).